Consider the following 244-residue polypeptide: MRRSTSNGAVVVPATQDGLFHDSPFPIPDSRLIAGVDEAGRGPLAGPVAVAAVVFDPGKPRINGLDDSKQLTAERREQLYARIVDRALAWSVVLIDSEEIDRINIYQATMLGMRRAVEGVAHVAGFARIDGNRVPKGLPCPAEALIGGDALDRAIMAASIVAKVTRDRLMHELHTRHPEYRFDQHKGYSTPVHLAALQTHGPCPQHRRSFAPVRLALQGREGLEPDPGTRDLEQLQVGQLVAPL.

The region spanning 31 to 222 (RLIAGVDEAG…VRLALQGREG (192 aa)) is the RNase H type-2 domain. Residues Asp-37, Glu-38, and Asp-130 each coordinate a divalent metal cation.

Belongs to the RNase HII family. Requires Mn(2+) as cofactor. It depends on Mg(2+) as a cofactor.

It localises to the cytoplasm. It catalyses the reaction Endonucleolytic cleavage to 5'-phosphomonoester.. Its function is as follows. Endonuclease that specifically degrades the RNA of RNA-DNA hybrids. The protein is Ribonuclease HII of Xanthomonas axonopodis pv. citri (strain 306).